Here is a 648-residue protein sequence, read N- to C-terminus: Leucine aminopeptidase 2 (648 aa).

A peptide contacts are provided by residues 143-145 (QCQ) and 269-274 (PYGGME). His-298 is a binding site for Zn(2+). Glu-299 functions as the Proton acceptor in the catalytic mechanism. Zn(2+) is bound by residues His-302 and Glu-321. Tyr-408 (proton donor) is an active-site residue.

It belongs to the peptidase M1 family. The cofactor is Zn(2+).

The protein localises to the cytoplasm. Its subcellular location is the nucleus. It catalyses the reaction an epoxide + H2O = an ethanediol. Its function is as follows. Aminopeptidase that preferentially cleaves di- and tripeptides. Also has low epoxide hydrolase activity (in vitro). Can hydrolyze the epoxide leukotriene LTA(4) but it forms preferentially 5,6-dihydroxy-7,9,11,14-eicosatetraenoic acid rather than the cytokine leukotriene B(4) as the product compared to the homologous mammalian enzyme (in vitro). The polypeptide is Leucine aminopeptidase 2 (Lodderomyces elongisporus (strain ATCC 11503 / CBS 2605 / JCM 1781 / NBRC 1676 / NRRL YB-4239) (Yeast)).